Reading from the N-terminus, the 781-residue chain is Tax1-binding protein 1 homolog A (781 aa).

2 coiled-coil regions span residues 148–453 and 488–581; these read NSDI…QGDA and DVEK…YMRE. Positions 441 to 465 are enriched in polar residues; sequence KLTQQQETQQGDANRNDASTETTLE. Disordered stretches follow at residues 441–510 and 630–691; these read KLTQ…EEEC and ETRD…EAPA. Positions 484-495 are enriched in basic and acidic residues; that stretch reads TVARDVEKSRDE. Residues 496 to 510 are compositionally biased toward acidic residues; it reads EGNEQEEEDEEEEEC. The span at 646-656 shows a compositional bias: pro residues; that stretch reads RPPPLAPPPWG. 2 consecutive UBZ1-type zinc fingers follow at residues 716-742 and 743-769; these read HKQC…VESH and WRVC…VHTH. Residues cysteine 719, cysteine 722, histidine 738, histidine 742, cysteine 746, cysteine 749, histidine 765, and histidine 769 each coordinate Zn(2+).

Little expression is observed during pectoral fin development, except for an elevated level of expression in the distal mesenchyme cells of some samples.

May have anti-apoptotic activity. The chain is Tax1-binding protein 1 homolog A from Danio rerio (Zebrafish).